Reading from the N-terminus, the 200-residue chain is MKIGIIAYQGSFEEHFLQLKRAFDKLSLNGEIISIKIPKDLKGVDGVIIPGGESTTIGLVAKRLGLLDELKEKITSGLPVLGTCAGAIMLAKEVSDAKVGKTSQPLIGTMNISVIRNYYGRQKESFEAIVDLSKIGKDKAHVVFIRAPAIAKVWGKAQSLAELNGVTVFAEENNMLATTFHPELSDTTSIHEYFLHLVKG.

52–54 (GES) is an L-glutamine binding site. The active-site Nucleophile is Cys84. L-glutamine contacts are provided by residues Arg116 and 145–146 (IR). Catalysis depends on charge relay system residues His181 and Glu183.

Belongs to the glutaminase PdxT/SNO family. In the presence of PdxS, forms a dodecamer of heterodimers. Only shows activity in the heterodimer.

The catalysed reaction is aldehydo-D-ribose 5-phosphate + D-glyceraldehyde 3-phosphate + L-glutamine = pyridoxal 5'-phosphate + L-glutamate + phosphate + 3 H2O + H(+). It carries out the reaction L-glutamine + H2O = L-glutamate + NH4(+). It functions in the pathway cofactor biosynthesis; pyridoxal 5'-phosphate biosynthesis. Catalyzes the hydrolysis of glutamine to glutamate and ammonia as part of the biosynthesis of pyridoxal 5'-phosphate. The resulting ammonia molecule is channeled to the active site of PdxS. This chain is Pyridoxal 5'-phosphate synthase subunit PdxT, found in Saccharolobus solfataricus (strain ATCC 35092 / DSM 1617 / JCM 11322 / P2) (Sulfolobus solfataricus).